We begin with the raw amino-acid sequence, 322 residues long: Adenine deaminase (322 aa).

Zn(2+) is bound by residues histidine 11, histidine 13, and histidine 189. The active-site Proton donor is glutamate 192. Residue aspartate 270 coordinates Zn(2+). Aspartate 271 is a substrate binding site.

It belongs to the metallo-dependent hydrolases superfamily. Adenosine and AMP deaminases family. Adenine deaminase type 2 subfamily. The cofactor is Zn(2+).

It carries out the reaction adenine + H2O + H(+) = hypoxanthine + NH4(+). Its function is as follows. Catalyzes the hydrolytic deamination of adenine to hypoxanthine. Plays an important role in the purine salvage pathway and in nitrogen catabolism. In Rhizobium rhizogenes (strain K84 / ATCC BAA-868) (Agrobacterium radiobacter), this protein is Adenine deaminase.